The sequence spans 639 residues: Polyphenol oxidase, chloroplastic (639 aa).

A chloroplast-targeting transit peptide spans 1 to 101; that stretch reads MATLSSPTII…EGANYYNTLA (101 aa). Positions 35 to 58 are disordered; sequence GVRSVNGKVSCQTKNNNGNDENNQ. 2 disulfides stabilise this stretch: cysteine 111-cysteine 127 and cysteine 126-cysteine 194. The Cu cation site is built by histidine 193, histidine 214, histidine 223, histidine 354, histidine 358, and histidine 388. The segment at residues 197–214 is a cross-link (2'-(S-cysteinyl)-histidine (Cys-His)); the sequence is CDGSYPVLGHNDTRLEVH.

Belongs to the tyrosinase family. The cofactor is Cu(2+).

Its subcellular location is the plastid. It localises to the chloroplast thylakoid lumen. The catalysed reaction is 2 catechol + O2 = 2 1,2-benzoquinone + 2 H2O. Functionally, catalyzes the oxidation of mono- and o-diphenols to o-diquinones. This is Polyphenol oxidase, chloroplastic from Spinacia oleracea (Spinach).